The chain runs to 102 residues: Small ribosomal subunit protein bS18c (102 aa).

This sequence belongs to the bacterial ribosomal protein bS18 family. As to quaternary structure, part of the 30S ribosomal subunit.

It localises to the plastid. Its subcellular location is the chloroplast. The protein is Small ribosomal subunit protein bS18c of Phaseolus vulgaris (Kidney bean).